Reading from the N-terminus, the 355-residue chain is Anthranilate phosphoribosyltransferase (355 aa).

Residues Gly-99, 102-103 (GD), Thr-107, 109-112 (NIST), 127-135 (KHGNRSVSS), and Ser-139 each bind 5-phospho-alpha-D-ribose 1-diphosphate. Gly-99 lines the anthranilate pocket. Residue Ser-111 participates in Mg(2+) binding. Residue Asn-130 participates in anthranilate binding. Arg-185 is an anthranilate binding site. Asp-243 and Glu-244 together coordinate Mg(2+).

This sequence belongs to the anthranilate phosphoribosyltransferase family. In terms of assembly, homodimer. The cofactor is Mg(2+).

The enzyme catalyses N-(5-phospho-beta-D-ribosyl)anthranilate + diphosphate = 5-phospho-alpha-D-ribose 1-diphosphate + anthranilate. It participates in amino-acid biosynthesis; L-tryptophan biosynthesis; L-tryptophan from chorismate: step 2/5. Catalyzes the transfer of the phosphoribosyl group of 5-phosphorylribose-1-pyrophosphate (PRPP) to anthranilate to yield N-(5'-phosphoribosyl)-anthranilate (PRA). The protein is Anthranilate phosphoribosyltransferase of Pseudoalteromonas translucida (strain TAC 125).